An 892-amino-acid chain; its full sequence is MTDVTLKALAAERQVSVDRLVQQFADAGIRKSADDSVSAQEKQTLLAHLNREAVSGPDKLTLQRKTRSTLNIPGTGGKSKSVQIEVRKKRIFVKRDPQEAERLAAEEQAQREAEEQARREAEEQAKREAQQKAEREAAEQAKREAAEKAKREAAEKDKVSNQQTDDMTKTAQAEKARRENEAAELKRKAEEEARRKLEEEARRVAEEARRMAEENKWTATPEPVEDTSDYHVTTSQHARQAEDENDREVEGGRGRGRNAKAARPAKKGKHAESKADREEARAAVRGGKGGKRKGSSLQQGFQKPAQAVNRDVVIGETITVGELANKMAVKGSQVIKAMMKLGAMATINQVIDQETAQLVAEEMGHKVILRRENELEEAVMSDRDTGAAAEPRAPVVTIMGHVDHGKTSLLDYIRSTKVASGEAGGITQHIGAYHVETDNGMITFLDTPGHAAFTSMRARGAQATDIVVLVVAADDGVMPQTIEAIQHAKAAGVPVVVAVNKIDKPEADPDRVKNELSQYGILPEEWGGESQFVHVSAKAGTGIDELLDAILLQAEVLELKAVRKGMASGAVIESFLDKGRGPVATVLVREGTLHKGDIVLCGFEYGRVRAMRNELGQEVLEAGPSIPVEILGLSGVPAAGDEVTVVRDEKKAREVALYRQGKFREVKLARQQKSKLENMFANMTEGEVHEVNIVLKADVQGSVEAISDSLLKLSTDEVKVKIIGSGVGGITETDATLAAASNAILVGFNVRADASARKVIESESLDLRYYSVIYNLIDEVKAAMSGMLSPELKQQIIGLAEVRDVFKSPKFGAIAGCMVTEGTIKRHNPIRVLRDNVVIYEGELESLRRFKDDVNEVRNGMECGIGVKNYNDVRVGDMIEVFEIIEIQRTIA.

Basic and acidic residues-rich tracts occupy residues 93-159 (VKRD…KDKV) and 166-216 (DMTK…EENK). Residues 93 to 304 (VKRDPQEAER…SSLQQGFQKP (212 aa)) are disordered. Residues 254-269 (GRGRNAKAARPAKKGK) are compositionally biased toward basic residues. Basic and acidic residues predominate over residues 270–282 (HAESKADREEARA). The 170-residue stretch at 391–560 (PRAPVVTIMG…LLQAEVLELK (170 aa)) folds into the tr-type G domain. The interval 400–407 (GHVDHGKT) is G1. A GTP-binding site is contributed by 400-407 (GHVDHGKT). Residues 425-429 (GITQH) are G2. Positions 446–449 (DTPG) are G3. GTP-binding positions include 446-450 (DTPGH) and 500-503 (NKID). The segment at 500 to 503 (NKID) is G4. The G5 stretch occupies residues 536 to 538 (SAK).

The protein belongs to the TRAFAC class translation factor GTPase superfamily. Classic translation factor GTPase family. IF-2 subfamily.

Its subcellular location is the cytoplasm. Functionally, one of the essential components for the initiation of protein synthesis. Protects formylmethionyl-tRNA from spontaneous hydrolysis and promotes its binding to the 30S ribosomal subunits. Also involved in the hydrolysis of GTP during the formation of the 70S ribosomal complex. The protein is Translation initiation factor IF-2 of Salmonella gallinarum (strain 287/91 / NCTC 13346).